Here is a 76-residue protein sequence, read N- to C-terminus: Large ribosomal subunit protein uL29 (76 aa).

It belongs to the universal ribosomal protein uL29 family.

The polypeptide is Large ribosomal subunit protein uL29 (Corynebacterium aurimucosum (strain ATCC 700975 / DSM 44827 / CIP 107346 / CN-1) (Corynebacterium nigricans)).